The chain runs to 210 residues: Small ribosomal subunit protein uS4 (210 aa).

A disordered region spans residues 30–49 (EKSSLEKRKYPPGLPPKKKG). An S4 RNA-binding domain is found at 99-162 (RRLDNVLYRM…QKSAFIEENI (64 aa)).

The protein belongs to the universal ribosomal protein uS4 family. As to quaternary structure, part of the 30S ribosomal subunit. Contacts protein S5. The interaction surface between S4 and S5 is involved in control of translational fidelity.

One of the primary rRNA binding proteins, it binds directly to 16S rRNA where it nucleates assembly of the body of the 30S subunit. In terms of biological role, with S5 and S12 plays an important role in translational accuracy. This is Small ribosomal subunit protein uS4 from Leptospira biflexa serovar Patoc (strain Patoc 1 / Ames).